A 205-amino-acid chain; its full sequence is Meiotic nuclear division protein 1 homolog (205 aa).

At S2 the chain carries N-acetylserine. A coiled-coil region spans residues 83–173 (KRKLEVLDSQ…EAANRWTDNI (91 aa)).

It belongs to the MND1 family. As to quaternary structure, heterodimer with PSMC3IP/HOP2. MND1-PSMC3IP interacts with DMC1 and RAD51 and binds preferentially to dsDNA.

It localises to the nucleus. Functionally, required for proper homologous chromosome pairing and efficient cross-over and intragenic recombination during meiosis. Stimulates both DMC1- and RAD51-mediated homologous strand assimilation, which is required for the resolution of meiotic double-strand breaks. This Bos taurus (Bovine) protein is Meiotic nuclear division protein 1 homolog.